We begin with the raw amino-acid sequence, 142 residues long: Deoxyuridine 5'-triphosphate nucleotidohydrolase (142 aa).

Substrate-binding positions include 62-64 (RSG), Asn75, and 79-81 (TID).

It belongs to the dUTPase family. It depends on Mg(2+) as a cofactor.

The catalysed reaction is dUTP + H2O = dUMP + diphosphate + H(+). The protein operates within pyrimidine metabolism; dUMP biosynthesis; dUMP from dCTP (dUTP route): step 2/2. In terms of biological role, this enzyme is involved in nucleotide metabolism: it produces dUMP, the immediate precursor of thymidine nucleotides and it decreases the intracellular concentration of dUTP so that uracil cannot be incorporated into DNA. The chain is Deoxyuridine 5'-triphosphate nucleotidohydrolase from Crocosphaera subtropica (strain ATCC 51142 / BH68) (Cyanothece sp. (strain ATCC 51142)).